The sequence spans 110 residues: Nucleoid-associated protein PsycPRwf_1729 (110 aa).

It belongs to the YbaB/EbfC family. Homodimer.

It localises to the cytoplasm. The protein resides in the nucleoid. Its function is as follows. Binds to DNA and alters its conformation. May be involved in regulation of gene expression, nucleoid organization and DNA protection. This chain is Nucleoid-associated protein PsycPRwf_1729, found in Psychrobacter sp. (strain PRwf-1).